Consider the following 248-residue polypeptide: MLKNIYVTPLNLLKSATSLQQQVRTTFVLKRKYDPPLHKTNEKPRRMRAKNFIYELVDDTLVKKRPNIEVVLKTFVEGVGDKGDVVSMKPHFVYNKLLLPGLAAYNTPENVAKYAKTEAEKSTVKHSSPYAQRTVNMLETIVLAVVMNKDEPWVLEPWHIKASLRKTGFYCREECITLPKERIEGPDLKKENKDFYCTVTINKLEQARLKCRLHHWSTDPSERLPYVLEHWKLQSEPLLDVCSPEKTP.

The N-terminal 25 residues, 1–25 (MLKNIYVTPLNLLKSATSLQQQVRT), are a transit peptide targeting the mitochondrion.

The protein belongs to the bacterial ribosomal protein bL9 family. Component of the mitochondrial ribosome large subunit (39S) which comprises a 16S rRNA and about 50 distinct proteins.

It is found in the mitochondrion. The chain is Large ribosomal subunit protein bL9m (mRpL9) from Drosophila melanogaster (Fruit fly).